A 117-amino-acid polypeptide reads, in one-letter code: Large ribosomal subunit protein bL19 (117 aa).

This sequence belongs to the bacterial ribosomal protein bL19 family.

Functionally, this protein is located at the 30S-50S ribosomal subunit interface and may play a role in the structure and function of the aminoacyl-tRNA binding site. This Desulfosudis oleivorans (strain DSM 6200 / JCM 39069 / Hxd3) (Desulfococcus oleovorans) protein is Large ribosomal subunit protein bL19.